Here is a 177-residue protein sequence, read N- to C-terminus: Large ribosomal subunit protein uL6 (177 aa).

The protein belongs to the universal ribosomal protein uL6 family. In terms of assembly, part of the 50S ribosomal subunit.

Its function is as follows. This protein binds to the 23S rRNA, and is important in its secondary structure. It is located near the subunit interface in the base of the L7/L12 stalk, and near the tRNA binding site of the peptidyltransferase center. The protein is Large ribosomal subunit protein uL6 of Buchnera aphidicola subsp. Acyrthosiphon kondoi (Acyrthosiphon kondoi symbiotic bacterium).